Consider the following 312-residue polypeptide: Serpentine receptor class gamma-31 (312 aa).

Transmembrane regions (helical) follow at residues 6-26, 38-58, 92-112, 132-152, 180-200, 218-238, and 259-279; these read LITQ…TVVF, FLKL…NFYI, FIFC…LTSI, TYIL…PLLV, FILV…IICW, LFLV…IAML, and LLSP…LIIF.

The protein belongs to the nematode receptor-like protein srg family.

The protein localises to the membrane. This Caenorhabditis elegans protein is Serpentine receptor class gamma-31 (srg-31).